The sequence spans 333 residues: MGRPPCCDKIGVKKGPWTPEEDIILVSYIQEHGPGNWRSVPTHTGLRRCSKSCRLRWTNYLRPGIKRGNFTEHEEKMILHLQALLGNRWAAIASYLPERTDNDIKNYWNTHLKKKLKKMNDSCDSTINNGLDNKDFSISNKNTTSHQSSNSSKGQWERRLQTDINMAKQALCDALSIDKPQNPTNFSIPDLGYGPSSSSSSTTTTTTTTRNTNPYPSGVYASSAENIARLLQNFMKDTPKTSVPLPVAATEMAITTAASSPSTTEGDGEGIDHSLFSFNSIDEAEEKPKLIDHDINGLITQGSLSLFEKWLFDEQSHDMIINNMSLEGQEVLF.

HTH myb-type domains lie at 9-65 (KIGV…RPGI) and 66-116 (KRGN…KKKL). DNA-binding regions (H-T-H motif) lie at residues 37-61 (WRSV…TNYL) and 89-112 (WAAI…NTHL). A compositionally biased stretch (polar residues) spans 134–154 (KDFSISNKNTTSHQSSNSSKG). 2 disordered regions span residues 134 to 157 (KDFS…GQWE) and 183 to 218 (PTNF…YPSG). The segment covering 196–209 (SSSSSSTTTTTTTT) has biased composition (low complexity).

In terms of tissue distribution, expressed in germinating seeds, rosette and cauline leaves, flower buds, open flowers, stems and developing siliques.

It localises to the nucleus. In terms of biological role, transcription activator involved in the activation of cuticular wax biosynthesis under drought stress. Binds directly to the promoters of genes involved in cuticular wax biosynthesis. Transactivates WSD1, KCS2/DAISY, CER1, CER2, FAR3 and ECR genes. Functions together with MYB96 in the activation of cuticular wax biosynthesis. The protein is Transcription factor MYB94 of Arabidopsis thaliana (Mouse-ear cress).